Reading from the N-terminus, the 66-residue chain is Large ribosomal subunit protein uL29 (66 aa).

The protein belongs to the universal ribosomal protein uL29 family.

This Bartonella tribocorum (strain CIP 105476 / IBS 506) protein is Large ribosomal subunit protein uL29.